The primary structure comprises 424 residues: Serine--tRNA ligase (424 aa).

229–231 lines the L-serine pocket; that stretch reads TAE. 260 to 262 contributes to the ATP binding site; the sequence is RRE. E283 is a binding site for L-serine. Position 347 to 350 (347 to 350) interacts with ATP; the sequence is EVSS. Position 383 (S383) interacts with L-serine.

It belongs to the class-II aminoacyl-tRNA synthetase family. Type-1 seryl-tRNA synthetase subfamily. In terms of assembly, homodimer. The tRNA molecule binds across the dimer.

The protein resides in the cytoplasm. The enzyme catalyses tRNA(Ser) + L-serine + ATP = L-seryl-tRNA(Ser) + AMP + diphosphate + H(+). It catalyses the reaction tRNA(Sec) + L-serine + ATP = L-seryl-tRNA(Sec) + AMP + diphosphate + H(+). Its pathway is aminoacyl-tRNA biosynthesis; selenocysteinyl-tRNA(Sec) biosynthesis; L-seryl-tRNA(Sec) from L-serine and tRNA(Sec): step 1/1. Functionally, catalyzes the attachment of serine to tRNA(Ser). Is also able to aminoacylate tRNA(Sec) with serine, to form the misacylated tRNA L-seryl-tRNA(Sec), which will be further converted into selenocysteinyl-tRNA(Sec). The sequence is that of Serine--tRNA ligase from Roseiflexus castenholzii (strain DSM 13941 / HLO8).